A 376-amino-acid polypeptide reads, in one-letter code: Ribonucleoside-diphosphate reductase 1 subunit beta (376 aa).

Fe cation is bound by residues Asp85, Glu116, and His119. Tyr123 is an active-site residue. Fe cation contacts are provided by Glu205, Glu239, and His242.

This sequence belongs to the ribonucleoside diphosphate reductase small chain family. Tetramer of two alpha (R1) and two beta (R2) subunits. The B1 protein is a dimer of alpha subunits. A radical transfer pathway occurs between Tyr-123 of R2 and R1. Fe cation is required as a cofactor.

The enzyme catalyses a 2'-deoxyribonucleoside 5'-diphosphate + [thioredoxin]-disulfide + H2O = a ribonucleoside 5'-diphosphate + [thioredoxin]-dithiol. Functionally, provides the precursors necessary for DNA synthesis. Catalyzes the biosynthesis of deoxyribonucleotides from the corresponding ribonucleotides. R2 contains the tyrosyl radical required for catalysis. This Salmonella typhimurium (strain LT2 / SGSC1412 / ATCC 700720) protein is Ribonucleoside-diphosphate reductase 1 subunit beta (nrdB).